The following is a 1682-amino-acid chain: Merozoite surface protein 1 (1682 aa).

A signal peptide spans Met-1–Cys-19. Positions Ala-68–Ala-110 are disordered. Asn-233, Asn-462, Asn-528, and Asn-599 each carry an N-linked (GlcNAc...) asparagine glycan. The interval Ser-696–Thr-729 is disordered. 6 N-linked (GlcNAc...) asparagine glycosylation sites follow: Asn-785, Asn-881, Asn-901, Asn-947, Asn-1071, and Asn-1178. A disordered region spans residues Ile-870–Ala-918. Over residues Thr-871 to Asn-909 the composition is skewed to low complexity. Disordered stretches follow at residues Thr-1212–Pro-1241 and Lys-1433–Lys-1453. The segment covering Val-1227–Pro-1241 has biased composition (polar residues). The span at Ser-1437 to Pro-1446 shows a compositional bias: pro residues. N-linked (GlcNAc...) asparagine glycosylation is present at Asn-1569. EGF-like domains are found at residues His-1573–Pro-1613 and Asn-1614–Ser-1661. 6 disulfides stabilise this stretch: Cys-1575–Cys-1586, Cys-1580–Cys-1596, Cys-1598–Cys-1609, Cys-1617–Cys-1630, Cys-1624–Cys-1644, and Cys-1646–Cys-1660. A lipid anchor (GPI-anchor amidated serine) is attached at Ser-1661. Residues Ser-1662–Ile-1682 constitute a propeptide, removed in mature form.

Forms a complex composed of subunits p83, p30, p38, and p42 which remain non-covalently associated; the complex is formed at the merozoite surface prior to egress from host erythrocytes. Forms a complex composed of processed MSP1 subunits, MSP6 subunit p36 and MSP7; the complex is formed at the merozoite surface prior to egress from host erythrocytes. Within the complex, interacts (via subunit p38) with MSP6 subunit p36 and (via subunits p83, p30 and p38) with MSP7 (via subunit p22). Forms a complex composed of MSP1, MSP6, DBLMSP1 and DBLMSP2. Within the complex, interacts (via subunit p38) with DBLMSP1 and DBLMSP2. Forms a complex composed of MSP1, and rhoptry proteins RhopH3, RAP1 and CLAG9/RhopH3. Within the complex, interacts (via subunits p42 and p19) with RhopH3 (via C-terminus). Forms a complex composed of MSP1, MSP6, MSP7, MSP9 and MSP3; within the complex, MSP6 and MSP9 mediate the binding to the host erythrocyte. Interacts (via subunits p19 and p42) with MSP9; the interaction is direct; MSP1 subunits p19 or p42, and MSP9 form a co-ligand complex that interacts with host SLC4A1/Band 3 protein. May interact with PFD6. Interacts with host spectrin. As to quaternary structure, interacts with host glycophorin GYPA in a sialic acid-independent manner. In terms of assembly, interacts with host proinflammatory cytokine S100P; the interaction blocks S100P inflammatory and chemotactic activities. Interacts with host SLC4A1/Band 3 (via 5ABC region) on the host erythrocyte surface in a sialic acid-independent manner. In terms of processing, the p190 precursor is cleaved by SUB1 prior to merozoite egress into 4 subunits p83, p30, p38, and p42 which remain non-covalently associated. SUB1-mediated proteolytic cleavage occurs in an orderly manner; the first cleavage occurs at the p30/p38 site, followed by cleavage at the p83/p30 site, the last cleavage occurs at the p38/p42 site. The order of cleavage is essential for parasite viability. SUB1-mediated processing is essential for merozoite egress. In a second processing step during erythrocyte invasion, p42 is cleaved by SUB2 into p33 and p19; the latter remains attached to the merozoite surface via its GPI-anchor and is endocytosed during the subsequent ring stage.

It localises to the cell membrane. Its subcellular location is the secreted. The protein resides in the vacuole membrane. Functionally, during the asexual blood stage, involved in merozoite egress from host erythrocytes possibly via its interaction with the host cytoskeleton protein spectrin resulting in the destabilization of the host cytoskeleton and thus leading to erythrocyte cell membrane rupture. Involved in the binding to host erythrocytes and is required for host erythrocyte invasion. In terms of biological role, by binding to host proinflammatory cytokine S100P may interfere with host immune responses. Involved in merozoite invasion of host erythrocytes. May play a role in the biogenesis and/or function of the food vacuole during the intraerythrocytic development. The protein is Merozoite surface protein 1 of Plasmodium falciparum (isolate ro-33 / Ghana).